A 352-amino-acid chain; its full sequence is Protein-glutamate methylesterase/protein-glutamine glutaminase (352 aa).

One can recognise a Response regulatory domain in the interval 4 to 121 (RVLIVDDSAT…YDGIDEIQKE (118 aa)). Asp55 is modified (4-aspartylphosphate). One can recognise a CheB-type methylesterase domain in the interval 159–351 (AQTTNKLIAI…VKIASLLSER (193 aa)). Active-site residues include Ser171, His197, and Asp293.

The protein belongs to the CheB family. Phosphorylated by CheA. Phosphorylation of the N-terminal regulatory domain activates the methylesterase activity.

It is found in the cytoplasm. It carries out the reaction [protein]-L-glutamate 5-O-methyl ester + H2O = L-glutamyl-[protein] + methanol + H(+). It catalyses the reaction L-glutaminyl-[protein] + H2O = L-glutamyl-[protein] + NH4(+). Involved in chemotaxis. Part of a chemotaxis signal transduction system that modulates chemotaxis in response to various stimuli. Catalyzes the demethylation of specific methylglutamate residues introduced into the chemoreceptors (methyl-accepting chemotaxis proteins or MCP) by CheR. Also mediates the irreversible deamidation of specific glutamine residues to glutamic acid. The chain is Protein-glutamate methylesterase/protein-glutamine glutaminase from Sulfurimonas denitrificans (strain ATCC 33889 / DSM 1251) (Thiomicrospira denitrificans (strain ATCC 33889 / DSM 1251)).